We begin with the raw amino-acid sequence, 88 residues long: Large ribosomal subunit protein bL31B (88 aa).

The protein belongs to the bacterial ribosomal protein bL31 family. Type B subfamily. In terms of assembly, part of the 50S ribosomal subunit.

The protein is Large ribosomal subunit protein bL31B of Leuconostoc mesenteroides subsp. mesenteroides (strain ATCC 8293 / DSM 20343 / BCRC 11652 / CCM 1803 / JCM 6124 / NCDO 523 / NBRC 100496 / NCIMB 8023 / NCTC 12954 / NRRL B-1118 / 37Y).